The sequence spans 588 residues: Sperm-associated microtubule inner protein 4 (588 aa).

Phosphothreonine is present on Thr-219. Phosphoserine occurs at positions 224, 406, 421, 427, and 437. Tyr-441 is subject to Phosphotyrosine. Ser-457 and Ser-484 each carry phosphoserine. Thr-512 carries the phosphothreonine modification. Ser-516 is modified (phosphoserine). Residue Lys-543 forms a Glycyl lysine isopeptide (Lys-Gly) (interchain with G-Cter in SUMO2) linkage. Position 545 is a phosphoserine (Ser-545).

It localises to the cytoplasm. It is found in the cytoskeleton. The protein localises to the microtubule organizing center. The protein resides in the centrosome. Its subcellular location is the flagellum axoneme. Its function is as follows. Microtubule inner protein (MIP) part of the dynein-decorated doublet microtubules (DMTs) in flagellum axoneme. May serve to reinforce and thus stabilize the microtubule structure in the sperm flagella. The chain is Sperm-associated microtubule inner protein 4 (Spmip4) from Rattus norvegicus (Rat).